Here is a 470-residue protein sequence, read N- to C-terminus: Argininosuccinate synthase (470 aa).

ATP is bound by residues 17-25 (AFSGGLDTS) and A43. L-citrulline is bound at residue Y99. Positions 129 and 131 each coordinate ATP. T131, N135, and D136 together coordinate L-aspartate. Residue N135 participates in L-citrulline binding. ATP is bound at residue D136. L-citrulline is bound by residues R139 and S192. D194 contributes to the ATP binding site. Residues T201, E203, and E280 each coordinate L-citrulline. The tract at residues 448 to 470 (IASRGESSGDELLDRAAMESGTD) is disordered.

Belongs to the argininosuccinate synthase family. Type 2 subfamily. Homotetramer.

It localises to the cytoplasm. It catalyses the reaction L-citrulline + L-aspartate + ATP = 2-(N(omega)-L-arginino)succinate + AMP + diphosphate + H(+). Its pathway is amino-acid biosynthesis; L-arginine biosynthesis; L-arginine from L-ornithine and carbamoyl phosphate: step 2/3. This Kineococcus radiotolerans (strain ATCC BAA-149 / DSM 14245 / SRS30216) protein is Argininosuccinate synthase.